Reading from the N-terminus, the 247-residue chain is ATP synthase subunit a, chloroplastic (247 aa).

Helical transmembrane passes span 38–58 (QVLITSWVVIAILLGSAFIAV), 95–115 (VPFIGTLFLFIFVSNWSGALL), 134–154 (INTTVALALLTSIAYFYAGLS), 199–219 (LVVVVLVSLVPLVVPIPVMFL), and 220–240 (GLFTSGIQALIFATLAAAYIG).

This sequence belongs to the ATPase A chain family. As to quaternary structure, F-type ATPases have 2 components, CF(1) - the catalytic core - and CF(0) - the membrane proton channel. CF(1) has five subunits: alpha(3), beta(3), gamma(1), delta(1), epsilon(1). CF(0) has four main subunits: a, b, b' and c.

The protein resides in the plastid. Its subcellular location is the chloroplast thylakoid membrane. Its function is as follows. Key component of the proton channel; it plays a direct role in the translocation of protons across the membrane. The protein is ATP synthase subunit a, chloroplastic of Citrus sinensis (Sweet orange).